A 1423-amino-acid polypeptide reads, in one-letter code: Autophagy-related protein 11 (1423 aa).

Coiled-coil stretches lie at residues 551–589 and 625–978; these read DDEL…QSQA and SEGT…ASEL. Disordered regions lie at residues 583–660 and 1028–1048; these read LHRQ…SNRA and RAER…SLRK. The segment covering 585–602 has biased composition (polar residues); that stretch reads RQSQASRPGNLFQPQTNS. Positions 631–648 are enriched in basic and acidic residues; that stretch reads LLRRISELENELREEKQR. 2 stretches are compositionally biased toward polar residues: residues 650–660 and 1034–1047; these read SRIQNDLSNRA and QNPN…TSLR. Residues 1102–1130 are a coiled coil; it reads HRIKEVEHKARKWQKEARSYRDRAHIAQK. Positions 1327-1423 are disordered; it reads SLRAAAPETP…DYTYESPGKK (97 aa). A compositionally biased stretch (basic and acidic residues) spans 1383–1395; that stretch reads KTAEPRRMLDRQE.

Belongs to the ATG11 family. In terms of assembly, homodimer and potential homooligomers. Interacts with ATG1 kinase and the ATG19 and ATG34 cargo protein transporters. Interacts with ATG9, ATG17 and ATG20.

The protein localises to the preautophagosomal structure membrane. Its subcellular location is the vacuole membrane. Its function is as follows. Involved in cytoplasm to vacuole transport (Cvt), pexophagy, mitophagy and nucleophagy. Recruits mitochondria for their selective degradation via autophagy (mitophagy) during starvation, through its interaction with ATG32. Works as scaffold proteins that recruit ATG proteins to the pre-autophagosome (PAS), the site of vesicle/autophagosome formation. Required for ATG9 anterograde transport from the mitochondria to the PAS. Also recruits the ATG19-prAPE1 complex to the PAS. Required for the Cvt vesicles completion. Plays a role in morphological differentiation and cephalosporin production. The protein is Autophagy-related protein 11 of Hapsidospora chrysogena (Acremonium chrysogenum).